The chain runs to 66 residues: Cocaine- and amphetamine-regulated transcript protein (66 aa).

2 cysteine pairs are disulfide-bonded: Cys34–Cys52 and Cys40–Cys60.

This sequence belongs to the CART family.

Its subcellular location is the secreted. Its function is as follows. Satiety factor closely associated with the actions of leptin and neuropeptide y; this anorectic peptide inhibits both normal and starvation-induced feeding and completely blocks the feeding response induced by neuropeptide Y and regulated by leptin in the hypothalamus. The sequence is that of Cocaine- and amphetamine-regulated transcript protein (CARTPT) from Sus scrofa (Pig).